The sequence spans 103 residues: N(4)-acetylcytidine amidohydrolase (103 aa).

One can recognise an ASCH domain in the interval 6-100 (ITFFQRFQDD…GESQFYVIEF (95 aa)). Lysine 21 functions as the Proton acceptor in the catalytic mechanism. The active-site Nucleophile is threonine 24. Glutamate 74 serves as the catalytic Proton donor.

This sequence belongs to the N(4)-acetylcytidine amidohydrolase family.

The catalysed reaction is N(4)-acetylcytidine + H2O = cytidine + acetate + H(+). It carries out the reaction N(4)-acetyl-2'-deoxycytidine + H2O = 2'-deoxycytidine + acetate + H(+). The enzyme catalyses N(4)-acetylcytosine + H2O = cytosine + acetate + H(+). Its function is as follows. Catalyzes the hydrolysis of N(4)-acetylcytidine (ac4C). The sequence is that of N(4)-acetylcytidine amidohydrolase from Klebsiella pneumoniae subsp. pneumoniae (strain ATCC 700721 / MGH 78578).